Consider the following 812-residue polypeptide: Valine--tRNA ligase (812 aa).

The 'HIGH' region signature appears at 46–56 (PTVSGQLHIGH). A 'KMSKS' region motif is present at residues 536-540 (KMSKS). K539 contributes to the ATP binding site.

The protein belongs to the class-I aminoacyl-tRNA synthetase family. ValS type 2 subfamily. As to quaternary structure, monomer.

It localises to the cytoplasm. The catalysed reaction is tRNA(Val) + L-valine + ATP = L-valyl-tRNA(Val) + AMP + diphosphate. In terms of biological role, catalyzes the attachment of valine to tRNA(Val). As ValRS can inadvertently accommodate and process structurally similar amino acids such as threonine, to avoid such errors, it has a 'posttransfer' editing activity that hydrolyzes mischarged Thr-tRNA(Val) in a tRNA-dependent manner. This is Valine--tRNA ligase from Rickettsia conorii (strain ATCC VR-613 / Malish 7).